Reading from the N-terminus, the 133-residue chain is DNA-directed RNA polymerase subunit omega (133 aa).

This sequence belongs to the RNA polymerase subunit omega family. In terms of assembly, the RNAP catalytic core consists of 2 alpha, 1 beta, 1 beta' and 1 omega subunit. When a sigma factor is associated with the core the holoenzyme is formed, which can initiate transcription.

It carries out the reaction RNA(n) + a ribonucleoside 5'-triphosphate = RNA(n+1) + diphosphate. In terms of biological role, promotes RNA polymerase assembly. Latches the N- and C-terminal regions of the beta' subunit thereby facilitating its interaction with the beta and alpha subunits. This is DNA-directed RNA polymerase subunit omega from Brucella abortus (strain S19).